The primary structure comprises 307 residues: Protein YIF1A (307 aa).

Residues 1-42 form a disordered region; it reads MNFQQQGYRATKPRARASPPTGGPMLFDDTSSGPPPMNNQNY. At 1 to 148 the chain is on the cytoplasmic side; the sequence is MNFQQQGYRA…TPRHDVNAPD (148 aa). Residues 149-169 form a helical membrane-spanning segment; the sequence is LYIPTMAFITYILLAGMALGI. Residues 170-184 are Lumenal-facing; sequence QKRFSPEVLGLCAST. The helical transmembrane segment at 185–205 threads the bilayer; it reads ALVWMIIEVLVMLLSLYLLTV. The Cytoplasmic portion of the chain corresponds to 206–213; the sequence is HTDLSTFD. The helical transmembrane segment at 214-236 threads the bilayer; the sequence is LVAYSGYKYVGMILTVFCGLLFG. The Lumenal segment spans residues 237–239; the sequence is SDG. The chain crosses the membrane as a helical span at residues 240–259; the sequence is YYVALAWSSCALMFFIVRSL. Residues 260-285 are Cytoplasmic-facing; it reads KMKILSSISADSMGAGASAKPRFRLY. The chain crosses the membrane as a helical span at residues 286–306; that stretch reads ITVASAAFQPFIIYWLTAHLV.

It belongs to the YIF1 family.

The protein localises to the endoplasmic reticulum membrane. It localises to the golgi apparatus membrane. The protein resides in the endoplasmic reticulum-Golgi intermediate compartment membrane. Its function is as follows. Possible role in transport between endoplasmic reticulum and Golgi. The protein is Protein YIF1A (yif1a) of Danio rerio (Zebrafish).